We begin with the raw amino-acid sequence, 294 residues long: ATP phosphoribosyltransferase (294 aa).

The protein belongs to the ATP phosphoribosyltransferase family. Long subfamily. Mg(2+) is required as a cofactor.

It localises to the cytoplasm. It catalyses the reaction 1-(5-phospho-beta-D-ribosyl)-ATP + diphosphate = 5-phospho-alpha-D-ribose 1-diphosphate + ATP. It participates in amino-acid biosynthesis; L-histidine biosynthesis; L-histidine from 5-phospho-alpha-D-ribose 1-diphosphate: step 1/9. Its activity is regulated as follows. Feedback inhibited by histidine. Catalyzes the condensation of ATP and 5-phosphoribose 1-diphosphate to form N'-(5'-phosphoribosyl)-ATP (PR-ATP). Has a crucial role in the pathway because the rate of histidine biosynthesis seems to be controlled primarily by regulation of HisG enzymatic activity. The chain is ATP phosphoribosyltransferase from Chlorobium phaeobacteroides (strain DSM 266 / SMG 266 / 2430).